We begin with the raw amino-acid sequence, 272 residues long: Putative hydro-lyase AZC_4080 (272 aa).

This sequence belongs to the D-glutamate cyclase family.

This is Putative hydro-lyase AZC_4080 from Azorhizobium caulinodans (strain ATCC 43989 / DSM 5975 / JCM 20966 / LMG 6465 / NBRC 14845 / NCIMB 13405 / ORS 571).